We begin with the raw amino-acid sequence, 374 residues long: uncharacterized protein (374 aa).

This sequence belongs to the mimivirus L41 family.

This is an uncharacterized protein from Acanthamoeba polyphaga (Amoeba).